We begin with the raw amino-acid sequence, 982 residues long: Glutamate [NMDA] receptor subunit 1 (982 aa).

The first 22 residues, 1–22 (MRVAFIYRWLLCGAAIVNVLVA), serve as a signal peptide directing secretion. Topologically, residues 23 to 568 (QRHTASDNPS…TLVSFLQPFS (546 aa)) are extracellular. N-linked (GlcNAc...) asparagine glycans are attached at residues asparagine 253, asparagine 309, asparagine 340, asparagine 392, asparagine 449, asparagine 476, and asparagine 496. Residues 525-527 (PLT) and arginine 532 contribute to the glycine site. The chain crosses the membrane as a helical span at residues 569–589 (NTLWILVMVSVHVVALVLYLL). Over 590–646 (DRFSPFGRFKLSHSDSNEEKALNLSSAVWFAWGVLLNSGIGEGTPRSFSARVLGMVW) the chain is Cytoplasmic. Residues 647-667 (AGFAMIIVASYTANLAAFLVL) form a helical membrane-spanning segment. The Extracellular segment spans residues 668–826 (ERPKTKLSGI…KTPNTLGLKN (159 aa)). Asparagine 688 carries an N-linked (GlcNAc...) asparagine glycan. Positions 698 and 742 each coordinate glycine. The chain crosses the membrane as a helical span at residues 827–847 (MAGVFILVGVGIAGGVGLIII). At 848–982 (EVIYKKHQVK…YTSDVSHLVV (135 aa)) the chain is on the cytoplasmic side. A disordered region spans residues 948-982 (LTASQLGLGKTRPQQNPLPPRYSPGYTSDVSHLVV). Over residues 972–982 (GYTSDVSHLVV) the composition is skewed to polar residues.

The protein belongs to the glutamate-gated ion channel (TC 1.A.10.1) family. In terms of assembly, forms a heteromeric NMDA channel with Nmdar2.

It localises to the cell membrane. The protein resides in the postsynaptic cell membrane. The protein localises to the postsynaptic density. In terms of biological role, NMDA receptor subtype of glutamate-gated ion channels with high calcium permeability and voltage-dependent sensitivity to magnesium. Mediated by glycine. This protein plays a key role in synaptic plasticity, synaptogenesis, excitotoxicity, memory acquisition and learning. It mediates neuronal functions in glutamate neurotransmission. Is involved in the cell surface targeting of NMDA receptors. Plays a role in associative learning and in long-term memory consolidation. The chain is Glutamate [NMDA] receptor subunit 1 from Drosophila grimshawi (Hawaiian fruit fly).